The primary structure comprises 798 residues: Integrin beta-1 (798 aa).

A signal peptide spans 1–20; that stretch reads MNLQLIFWIGLISSICCVFG. Topologically, residues 21 to 728 are extracellular; it reads QADENRCLKA…ETPECPTGPD (708 aa). The 51-residue stretch at 26-76 folds into the PSI domain; sequence RCLKANAKSCGECIQAGPNCGWCVNSTFLQEGMPTSARCDDLEALKKKGCH. 28 cysteine pairs are disulfide-bonded: cysteine 27/cysteine 45, cysteine 35/cysteine 464, cysteine 38/cysteine 64, cysteine 48/cysteine 75, cysteine 207/cysteine 213, cysteine 261/cysteine 301, cysteine 401/cysteine 415, cysteine 435/cysteine 462, cysteine 466/cysteine 486, cysteine 477/cysteine 489, cysteine 491/cysteine 500, cysteine 502/cysteine 533, cysteine 516/cysteine 531, cysteine 525/cysteine 536, cysteine 538/cysteine 553, cysteine 555/cysteine 576, cysteine 560/cysteine 574, cysteine 568/cysteine 579, cysteine 581/cysteine 590, cysteine 592/cysteine 615, cysteine 599/cysteine 613, cysteine 607/cysteine 618, cysteine 620/cysteine 630, cysteine 633/cysteine 636, cysteine 640/cysteine 691, cysteine 646/cysteine 665, cysteine 649/cysteine 661, and cysteine 699/cysteine 723. A glycan (N-linked (GlcNAc...) asparagine) is linked at asparagine 50. Positions 75–91 are enriched in basic and acidic residues; that stretch reads CHPDDIENPRGSKDVKK. The interval 75-107 is disordered; it reads CHPDDIENPRGSKDVKKNKNVTNRSKGTAEKLQ. 2 N-linked (GlcNAc...) asparagine glycosylation sites follow: asparagine 94 and asparagine 97. Residues 140–378 enclose the VWFA domain; that stretch reads DYPIDLYYLM…QLIIDAYNSL (239 aa). Residues serine 152 and serine 154 each contribute to the Mg(2+) site. Ca(2+)-binding residues include serine 154, aspartate 157, aspartate 158, and glutamate 189. Residues 207 to 213 form a CX3CL1-binding region; it reads CTSEQNC. The N-linked (GlcNAc...) asparagine glycan is linked to asparagine 212. 4 residues coordinate Ca(2+): asparagine 244, aspartate 246, proline 248, and glutamate 249. Glutamate 249 contacts Mg(2+). Asparagine 269 carries N-linked (GlcNAc...) asparagine glycosylation. Residues 295–314 are CX3CL1-binding; sequence LPNDGQCHLENDVYTMSHYY. Alanine 362 lines the Ca(2+) pocket. 3 N-linked (GlcNAc...) asparagine glycosylation sites follow: asparagine 363, asparagine 406, and asparagine 417. Residues 383-465 form an interaction with TMEM182 region; it reads ILENSKLPEG…IILQFICECE (83 aa). I-EGF domains follow at residues 466–501, 502–554, 555–591, and 592–631; these read CQNEGIPSSPKCHEGNGSFECGACRCNEGRVGRHCE, CSTD…KFCE, CDNFNCDRSNGLICGGNGVCKCRVCECNPNYTGSACD, and CSLDTTSCMATNGQICNGRGICECGACKCTDPKFQGPTCE. Residue asparagine 481 is glycosylated (N-linked (GlcNAc...) asparagine). Asparagine 520 carries an N-linked (GlcNAc...) asparagine glycan. The N-linked (GlcNAc...) asparagine glycan is linked to asparagine 584. Asparagine 669 carries N-linked (GlcNAc...) asparagine glycosylation. Residues 729–751 traverse the membrane as a helical segment; sequence IIPIVAGVVAGIVLIGLALLLIW. The Cytoplasmic portion of the chain corresponds to 752–798; the sequence is KLLMIIHDTREFAKFEKEKMNAKWDTGENPIYKSAVTTVVNPKYEGK. Positions 762-767 are signal for sorting from recycling endosomes; interaction with ACAP1; sequence EFAKFE. The residue at position 777 (threonine 777) is a Phosphothreonine. Tyrosine 783 carries the phosphotyrosine modification. Serine 785 carries the post-translational modification Phosphoserine. The tract at residues 785-792 is interaction with ITGB1BP1; sequence SAVTTVVN. Threonine 789 bears the Phosphothreonine mark. Lysine 794 bears the N6-acetyllysine; alternate mark. A Glycyl lysine isopeptide (Lys-Gly) (interchain with G-Cter in SUMO1); alternate cross-link involves residue lysine 794.

The protein belongs to the integrin beta chain family. In terms of assembly, interacts with seprase FAP (seprase); the interaction occurs at the cell surface of invadopodia membrane in a collagen-dependent manner. Heterodimer of an alpha and a beta subunit. Beta-1 associates with either alpha-1, alpha-2, alpha-3, alpha-4, alpha-5, alpha-6, alpha-7, alpha-8, alpha-9, alpha-10, alpha-11 or alpha-V. ITGA6:ITGB1 is found in a complex with CD9; interaction takes place in oocytes and is involved in sperm-egg fusion. Binds LGALS3BP and NMRK2, when associated with alpha-7, but not with alpha-5. Interacts with FLNA, FLNB, FLNC and RANBP9. Interacts with KRT1 in the presence of RACK1 and SRC. Interacts with JAML; integrin alpha-4/beta-1 may regulate leukocyte to endothelial cells adhesion by controlling JAML homodimerization. Interacts with RAB21. Interacts (via the cytoplasmic region) with RAB25 (via the hypervariable C-terminal region). Interacts with MYO10. Interacts with ITGB1BP1 (via C-terminal region); the interaction is a prerequisite for focal adhesion disassembly. Interacts with TLN1; the interaction is prevented by competitive binding of ITGB1BP1. Interacts with ACAP1; required for ITGB1 recycling. Interacts with ASAP3. Interacts with FERMT2; the interaction is inhibited in presence of ITGB1BP1. Interacts with DAB2. Interacts with FGR and HCK. Interacts with alpha-7A and alpha-7B in adult skeletal muscle. Interacts with alpha-7B in cardiomyocytes of adult heart. Interacts with EMP2; the interaction may be direct or indirect and ITGB1 has a heterodimer form. ITGA5:ITGB1 interacts with CCN3. ITGA4:ITGB1 is found in a ternary complex with CX3CR1 and CX3CL1. ITGA5:ITGB1 interacts with FBN1. ITGA5:ITGB1 acts as a receptor for fibronectin FN1 and mediates R-G-D-dependent cell adhesion to FN1. ITGA5:ITGB1 interacts with IL1B. Interacts with MDK. ITGA4:ITGB1 interacts with MDK; this interaction mediates MDK-induced osteoblast cells migration through PXN phosphorylation. ITGA6:ITGB1 interacts with MDK; this interaction mediates MDK-induced neurite-outgrowth. ITGA5:ITGB1 interacts with ACE2. Interacts with TMEM182 and LAMB1. Interacts with tensin TNS3; TNS3 also interacts with PEAK1, thus acting as an adapter molecule to bridge the association of PEAK1 with ITGB1. Interacts with tensin TNS4; the interaction displaces tensin TNS3 from the ITGB1 cytoplasmic tail and promotes ITGB1 stability. Integrin ITGA9:ITGB1 interacts with SPP1/OPN (via N-terminus). Integrin ITGA9:ITGB1 interacts with TNC/TNFN3 (via the 3rd Fibronectin type-III domain). Integrins ITGA4:ITGB1 and ITGA9:ITGB1 interact with SVEP1 (via Sushi domain 21); thereby inhibit Ca(2+) intracellular signaling and as a result repress vasocontraction. ITGA4:ITGB1 and ITGA5:ITGB1 interacts with SELP. Interacts with CD248. ITGA5:ITGB1 interacts with IGFBP1. ITGA4:ITGB1 interacts with BCAM. Interacts with ADGRG6.

The protein localises to the cell membrane. Its subcellular location is the cell projection. The protein resides in the invadopodium membrane. It localises to the ruffle membrane. It is found in the recycling endosome. The protein localises to the melanosome. Its subcellular location is the lamellipodium. The protein resides in the ruffle. It localises to the cell junction. It is found in the focal adhesion. In terms of biological role, integrins alpha-1/beta-1, alpha-2/beta-1, alpha-10/beta-1 and alpha-11/beta-1 are receptors for collagen. Integrins alpha-1/beta-1 and alpha-2/beta-2 recognize the proline-hydroxylated sequence G-F-P-G-E-R in collagen. Integrins alpha-2/beta-1, alpha-3/beta-1, alpha-4/beta-1, alpha-5/beta-1, alpha-8/beta-1, alpha-10/beta-1, alpha-11/beta-1 and alpha-V/beta-1 are receptors for fibronectin. Alpha-4/beta-1 recognizes one or more domains within the alternatively spliced CS-1 and CS-5 regions of fibronectin. Integrin alpha-5/beta-1 is a receptor for fibrinogen. Integrin alpha-1/beta-1, alpha-2/beta-1, alpha-6/beta-1 and alpha-7/beta-1 are receptors for lamimin. Integrin alpha-6/beta-1 (ITGA6:ITGB1) is present in oocytes and is involved in sperm-egg fusion. Integrin alpha-4/beta-1 is a receptor for VCAM1 and recognizes the sequence Q-I-D-S in VCAM1. Integrin alpha-9/beta-1 is a receptor for VCAM1, cytotactin and osteopontin. It recognizes the sequence A-E-I-D-G-I-E-L in cytotactin. Integrin alpha-3/beta-1 is a receptor for epiligrin, thrombospondin and CSPG4. Integrin alpha-3/beta-1 provides a docking site for FAP (seprase) at invadopodia plasma membranes in a collagen-dependent manner and hence may participate in the adhesion, formation of invadopodia and matrix degradation processes, promoting cell invasion. Alpha-3/beta-1 may mediate with LGALS3 the stimulation by CSPG4 of endothelial cells migration. Integrin alpha-V/beta-1 is a receptor for vitronectin. Beta-1 integrins recognize the sequence R-G-D in a wide array of ligands. When associated with alpha-7/beta-1 integrin, regulates cell adhesion and laminin matrix deposition. Involved in promoting endothelial cell motility and angiogenesis. Involved in osteoblast compaction through the fibronectin fibrillogenesis cell-mediated matrix assembly process and the formation of mineralized bone nodules. May be involved in up-regulation of the activity of kinases such as PKC via binding to KRT1. Together with KRT1 and RACK1, serves as a platform for SRC activation or inactivation. Plays a mechanistic adhesive role during telophase, required for the successful completion of cytokinesis. ITGA4:ITGB1 binds to fractalkine (CX3CL1) and may act as its coreceptor in CX3CR1-dependent fractalkine signaling. ITGA4:ITGB1 and ITGA5:ITGB1 bind to PLA2G2A via a site (site 2) which is distinct from the classical ligand-binding site (site 1) and this induces integrin conformational changes and enhanced ligand binding to site 1. ITGA5:ITGB1 acts as a receptor for fibrillin-1 (FBN1) and mediates R-G-D-dependent cell adhesion to FBN1. ITGA5:ITGB1 is a receptor for IL1B and binding is essential for IL1B signaling. ITGA5:ITGB3 is a receptor for soluble CD40LG and is required for CD40/CD40LG signaling. Plays an important role in myoblast differentiation and fusion during skeletal myogenesis. ITGA9:ITGB1 may play a crucial role in SVEP1/polydom-mediated myoblast cell adhesion. Integrins ITGA9:ITGB1 and ITGA4:ITGB1 repress PRKCA-mediated L-type voltage-gated channel Ca(2+) influx and ROCK-mediated calcium sensitivity in vascular smooth muscle cells via their interaction with SVEP1, thereby inhibit vasocontraction. The protein is Integrin beta-1 (ITGB1) of Felis catus (Cat).